The following is a 334-amino-acid chain: Mevalonate kinase (334 aa).

110–120 (PVGAGLGSSAA) lines the ATP pocket. The active-site Proton acceptor is Asp161.

This sequence belongs to the GHMP kinase family. Mevalonate kinase subfamily. In terms of assembly, homodimer. Mg(2+) is required as a cofactor.

Its subcellular location is the cytoplasm. It carries out the reaction (R)-mevalonate + ATP = (R)-5-phosphomevalonate + ADP + H(+). It functions in the pathway isoprenoid biosynthesis; isopentenyl diphosphate biosynthesis via mevalonate pathway; isopentenyl diphosphate from (R)-mevalonate: step 1/3. In terms of biological role, catalyzes the phosphorylation of (R)-mevalonate (MVA) to (R)-mevalonate 5-phosphate (MVAP). Functions in the mevalonate (MVA) pathway leading to isopentenyl diphosphate (IPP), a key precursor for the biosynthesis of isoprenoid compounds such as archaeal membrane lipids. This chain is Mevalonate kinase, found in Thermococcus onnurineus (strain NA1).